We begin with the raw amino-acid sequence, 267 residues long: Regulatory protein VirG (267 aa).

Residues 29-143 (HVLLVDDDVA…EFLARIRVAL (115 aa)) form the Response regulatory domain. D78 is modified (4-aspartylphosphate). Residues 155 to 255 (RRSFCFTDWT…ARGAGYFFDA (101 aa)) constitute a DNA-binding region (ompR/PhoB-type).

Post-translationally, phosphorylated by wide host range (WHR) VirA protein.

The protein resides in the cytoplasm. In terms of biological role, virG is required for the positive regulation of at least two vir loci encoded by the Ti plasmid of A.tumefaciens. This is Regulatory protein VirG (virG) from Agrobacterium tumefaciens (strain 15955).